A 217-amino-acid polypeptide reads, in one-letter code: MKFFIDTADVGEIKKALALGLCDGVTTNPSLVAKTGRGFEDVLKEIVQLVPGPISAEVTATDYEGMLREGRHYAKFGSQVVIKVPLTVEGLRAVKTLTDEGTKVNVTLCFSPVQALLAAKAGATYISPFVGRLDDISQDGMAMVADIVQIYRNYGFKTQVLVASVRHPVHVLEAAKLGADVATIPYSVIEQLAKHPLTDAGLKKFLADWEKVPKAAK.

The Schiff-base intermediate with substrate role is filled by K83.

Belongs to the transaldolase family. Type 3B subfamily.

The protein resides in the cytoplasm. It catalyses the reaction D-sedoheptulose 7-phosphate + D-glyceraldehyde 3-phosphate = D-erythrose 4-phosphate + beta-D-fructose 6-phosphate. Its pathway is carbohydrate degradation; pentose phosphate pathway; D-glyceraldehyde 3-phosphate and beta-D-fructose 6-phosphate from D-ribose 5-phosphate and D-xylulose 5-phosphate (non-oxidative stage): step 2/3. In terms of biological role, transaldolase is important for the balance of metabolites in the pentose-phosphate pathway. This chain is Probable transaldolase, found in Anaeromyxobacter dehalogenans (strain 2CP-C).